Here is a 387-residue protein sequence, read N- to C-terminus: Succinate--CoA ligase [ADP-forming] subunit beta (387 aa).

An ATP-grasp domain is found at 9-236 (KELFAKHNVP…KDATDPLELK (228 aa)). Residues Lys45, 52-54 (GRG), Ser94, and Glu99 contribute to the ATP site. Mg(2+)-binding residues include Asn191 and Asp205. Substrate contacts are provided by residues Asn256 and 318–320 (GIT).

This sequence belongs to the succinate/malate CoA ligase beta subunit family. As to quaternary structure, heterotetramer of two alpha and two beta subunits. Requires Mg(2+) as cofactor.

It catalyses the reaction succinate + ATP + CoA = succinyl-CoA + ADP + phosphate. It carries out the reaction GTP + succinate + CoA = succinyl-CoA + GDP + phosphate. It participates in carbohydrate metabolism; tricarboxylic acid cycle; succinate from succinyl-CoA (ligase route): step 1/1. In terms of biological role, succinyl-CoA synthetase functions in the citric acid cycle (TCA), coupling the hydrolysis of succinyl-CoA to the synthesis of either ATP or GTP and thus represents the only step of substrate-level phosphorylation in the TCA. The beta subunit provides nucleotide specificity of the enzyme and binds the substrate succinate, while the binding sites for coenzyme A and phosphate are found in the alpha subunit. The sequence is that of Succinate--CoA ligase [ADP-forming] subunit beta from Mycolicibacterium gilvum (strain PYR-GCK) (Mycobacterium gilvum (strain PYR-GCK)).